Consider the following 208-residue polypeptide: Cysteine-rich protein 2 (208 aa).

The LIM zinc-binding 1 domain maps to 5–57 (CPKCDKTVYFAEKVSSLGKDWHKFCLKCERCNKTLTPGGHAEHDGKPFCHKPC). N6-acetyllysine is present on Lys23. Position 104 is a phosphoserine (Ser104). The LIM zinc-binding 2 domain occupies 126-178 (CPRCNKRVYFAEKVTSLGKDWHRPCLRCERCSKTLTPGGHAEHDGQPYCHKPC). 2 positions are modified to N6-acetyllysine: Lys138 and Lys144.

As to quaternary structure, interacts with TGFB1I1. In terms of tissue distribution, expressed more abundantly in liver and kidney of females than that of males. Equally expressed in brain, lung and heart.

This chain is Cysteine-rich protein 2 (Crip2), found in Rattus norvegicus (Rat).